The sequence spans 373 residues: Queuine tRNA-ribosyltransferase (373 aa).

The Proton acceptor role is filled by Asp-90. Residues 90–94 (DSGGF), Asp-144, Gln-193, and Gly-220 contribute to the substrate site. Residues 251–257 (GVGTPED) are RNA binding. Asp-270 functions as the Nucleophile in the catalytic mechanism. The interval 275-279 (TRNAR) is RNA binding; important for wobble base 34 recognition. The Zn(2+) site is built by Cys-308, Cys-310, Cys-313, and His-339.

The protein belongs to the queuine tRNA-ribosyltransferase family. Homodimer. Within each dimer, one monomer is responsible for RNA recognition and catalysis, while the other monomer binds to the replacement base PreQ1. Zn(2+) serves as cofactor.

The enzyme catalyses 7-aminomethyl-7-carbaguanine + guanosine(34) in tRNA = 7-aminomethyl-7-carbaguanosine(34) in tRNA + guanine. The protein operates within tRNA modification; tRNA-queuosine biosynthesis. Functionally, catalyzes the base-exchange of a guanine (G) residue with the queuine precursor 7-aminomethyl-7-deazaguanine (PreQ1) at position 34 (anticodon wobble position) in tRNAs with GU(N) anticodons (tRNA-Asp, -Asn, -His and -Tyr). Catalysis occurs through a double-displacement mechanism. The nucleophile active site attacks the C1' of nucleotide 34 to detach the guanine base from the RNA, forming a covalent enzyme-RNA intermediate. The proton acceptor active site deprotonates the incoming PreQ1, allowing a nucleophilic attack on the C1' of the ribose to form the product. After dissociation, two additional enzymatic reactions on the tRNA convert PreQ1 to queuine (Q), resulting in the hypermodified nucleoside queuosine (7-(((4,5-cis-dihydroxy-2-cyclopenten-1-yl)amino)methyl)-7-deazaguanosine). This chain is Queuine tRNA-ribosyltransferase, found in Campylobacter jejuni subsp. doylei (strain ATCC BAA-1458 / RM4099 / 269.97).